Consider the following 719-residue polypeptide: uncharacterized protein (719 aa).

A coiled-coil region spans residues 64-100 (IQNLNQRKEEVIRLIAEQDKLTDNLKRKIEQSVKLQE). One can recognise an S1 motif domain in the interval 649–718 (GMELQGTVRN…QKGRVSLSMV (70 aa)).

This is an uncharacterized protein from Bacillus subtilis (strain 168).